The following is a 228-amino-acid chain: MYDIRQWRHVFKLDPNKGISDEQLERICESGTDAVIVGGTDDVTLENVLELLARIRRFSVPCVLEISNLESVTPGFDFYFVPMVLNSREKKWIIDLHHEAVKQFGDIMNWDEIFMEGYCILHKNCKAAMLTDANTELQEDDVVAYARIAEHMYRLPIFYLEYSGSYGNPELVQRVKQVLKQTQLFYGGGIETEKQAKEMAQYADTIVVGNVIYEDIKKALATVKAVKQ.

Residue lysine 12 coordinates sn-glycerol 1-phosphate. The Mg(2+) site is built by aspartate 14 and threonine 40. Sn-glycerol 1-phosphate is bound by residues 159 to 164 (YLEYSG), glycine 189, and 209 to 210 (GN).

The protein belongs to the GGGP/HepGP synthase family. Group I subfamily. In terms of assembly, homodimer. Mg(2+) serves as cofactor.

It carries out the reaction sn-glycerol 1-phosphate + all-trans-heptaprenyl diphosphate = 3-heptaprenyl-sn-glycero-1-phosphate + diphosphate. The protein operates within membrane lipid metabolism; glycerophospholipid metabolism. Prenyltransferase that catalyzes in vivo the transfer of the heptaprenyl moiety of heptaprenyl pyrophosphate (HepPP; 35 carbon atoms) to the C3 hydroxyl of sn-glycerol-1-phosphate (G1P), producing heptaprenylglyceryl phosphate (HepGP). This reaction is an ether-bond-formation step in the biosynthesis of archaea-type G1P-based membrane lipids found in Bacillales. The protein is Heptaprenylglyceryl phosphate synthase of Geobacillus sp. (strain WCH70).